Consider the following 343-residue polypeptide: Heat-inducible transcription repressor HrcA (343 aa).

Belongs to the HrcA family.

In terms of biological role, negative regulator of class I heat shock genes (grpE-dnaK-dnaJ and groELS operons). Prevents heat-shock induction of these operons. This is Heat-inducible transcription repressor HrcA from Mycolicibacterium vanbaalenii (strain DSM 7251 / JCM 13017 / BCRC 16820 / KCTC 9966 / NRRL B-24157 / PYR-1) (Mycobacterium vanbaalenii).